Here is a 470-residue protein sequence, read N- to C-terminus: uncharacterized protein (470 aa).

An HTH gntR-type domain is found at 1–69; the sequence is MTRYQHLATL…PRSGYFVAQR (69 aa). An N6-(pyridoxal phosphate)lysine modification is found at Lys-313.

In the C-terminal section; belongs to the class-I pyridoxal-phosphate-dependent aminotransferase family.

This is an uncharacterized protein from Escherichia coli (strain K12).